The primary structure comprises 1447 residues: Regulator of G-protein signaling 12 (1447 aa).

The segment at Met-1–Arg-21 is disordered. The 77-residue stretch at Ser-22 to Gly-98 folds into the PDZ domain. Phosphoserine is present on residues Ser-172 and Ser-195. Lys-196 is covalently cross-linked (Glycyl lysine isopeptide (Lys-Gly) (interchain with G-Cter in SUMO2)). In terms of domain architecture, PID spans Val-228–Phe-340. Disordered regions lie at residues Ala-410 to Phe-429 and Leu-443 to Gly-482. Positions His-413–Gly-425 are enriched in polar residues. Positions Gly-451 to Gly-464 are enriched in gly residues. Omega-N-methylarginine is present on residues Arg-524 and Arg-633. The disordered stretch occupies residues Asn-618–Arg-652. 2 positions are modified to phosphoserine: Ser-661 and Ser-671. In terms of domain architecture, RGS spans Ser-715 to Ile-832. A compositionally biased stretch (polar residues) spans Asp-843–Ser-853. Positions Asp-843–Ala-941 are disordered. Phosphoserine occurs at positions 850 and 879. Residues Glu-914–Leu-923 are compositionally biased toward basic and acidic residues. Ser-943 bears the Phosphoserine mark. 2 RBD domains span residues Lys-962–Arg-1032 and Leu-1034–Lys-1104. Residues Glu-1103–Lys-1117 show a composition bias toward basic and acidic residues. The interval Glu-1103–Glu-1169 is disordered. Over residues Lys-1122–Ala-1136 the composition is skewed to polar residues. Residues Ile-1151–Glu-1169 are compositionally biased toward basic and acidic residues. A GoLoco domain is found at Ala-1187 to Leu-1209. Residues Gly-1240–Val-1447 are disordered. The span at Arg-1244 to Gly-1258 shows a compositional bias: polar residues. Low complexity-rich tracts occupy residues Ser-1267–Ser-1280 and Pro-1289–Pro-1298. Positions Thr-1301–Thr-1313 are enriched in polar residues.

In terms of assembly, interacts with GNAI1. Interacts with GNAI2 and GNAI3; the interactions are GDP-dependent. Isoform 3 is brain specific.

The protein localises to the nucleus. It is found in the cytoplasm. The protein resides in the cell projection. It localises to the dendrite. Its subcellular location is the synapse. The protein localises to the nucleus matrix. Functionally, regulates G protein-coupled receptor signaling cascades. Inhibits signal transduction by increasing the GTPase activity of G protein alpha subunits, thereby driving them into their inactive GDP-bound form. Behaves as a cell cycle-dependent transcriptional repressor, promoting inhibition of S-phase DNA synthesis. The polypeptide is Regulator of G-protein signaling 12 (RGS12) (Homo sapiens (Human)).